The following is a 652-amino-acid chain: Acetyl-coenzyme A synthetase (652 aa).

CoA is bound by residues 191–194, threonine 311, and asparagine 335; that span reads RAGR. Residues 387–389, 411–416, aspartate 500, and arginine 515 contribute to the ATP site; these read GEP and DTWWQT. Residue serine 523 participates in CoA binding. Arginine 526 provides a ligand contact to ATP. Positions 537, 539, and 542 each coordinate Mg(2+). CoA is bound at residue arginine 584. N6-acetyllysine; by Pat is present on lysine 609.

It belongs to the ATP-dependent AMP-binding enzyme family. In terms of assembly, monomer. Requires Mg(2+) as cofactor. Acetylated. Deacetylation by the SIR2-homolog deacetylase activates the enzyme.

The catalysed reaction is acetate + ATP + CoA = acetyl-CoA + AMP + diphosphate. Its function is as follows. Catalyzes the conversion of acetate into acetyl-CoA (AcCoA), an essential intermediate at the junction of anabolic and catabolic pathways. Acs undergoes a two-step reaction. In the first half reaction, Acs combines acetate with ATP to form acetyl-adenylate (AcAMP) intermediate. In the second half reaction, it can then transfer the acetyl group from AcAMP to the sulfhydryl group of CoA, forming the product AcCoA. Required for acetate recapture but not for acetate excretion when this organism is grown on ethanolamine. Enables the cell to use acetate during aerobic growth to generate energy via the TCA cycle, and biosynthetic compounds via the glyoxylate shunt. Acetylates CheY, the response regulator involved in flagellar movement and chemotaxis. This is Acetyl-coenzyme A synthetase from Salmonella typhimurium (strain LT2 / SGSC1412 / ATCC 700720).